The following is a 485-amino-acid chain: Rhamnulokinase (485 aa).

Residue 12-16 (ATSGR) participates in ATP binding. Residues Gly-80 and 238–240 (HDT) each bind substrate. Residue Asp-239 is the Proton acceptor of the active site. Position 261 (Thr-261) interacts with ATP. Asn-298 provides a ligand contact to substrate. Glu-306 serves as a coordination point for ATP. Cys-355 and Cys-372 are joined by a disulfide. Residue Gly-404 coordinates ATP.

It belongs to the rhamnulokinase family. It depends on Mg(2+) as a cofactor.

It catalyses the reaction L-rhamnulose + ATP = L-rhamnulose 1-phosphate + ADP + H(+). Its pathway is carbohydrate degradation; L-rhamnose degradation; glycerone phosphate from L-rhamnose: step 2/3. Involved in the catabolism of L-rhamnose (6-deoxy-L-mannose). Catalyzes the transfer of the gamma-phosphate group from ATP to the 1-hydroxyl group of L-rhamnulose to yield L-rhamnulose 1-phosphate. The chain is Rhamnulokinase from Bacteroides thetaiotaomicron (strain ATCC 29148 / DSM 2079 / JCM 5827 / CCUG 10774 / NCTC 10582 / VPI-5482 / E50).